The sequence spans 29 residues: Lambda-theraphotoxin-Ec2a (29 aa).

3 disulfides stabilise this stretch: cysteine 2–cysteine 16, cysteine 9–cysteine 21, and cysteine 15–cysteine 25.

Belongs to the neurotoxin 30 (phrixotoxin) family. Expressed by the venom gland.

Its subcellular location is the secreted. Its function is as follows. Insect-selective neurotoxin that potently blocks insect calcium-activated potassium (BKCa) channels (Slo-type) in cockroach dorsal unpaired median (DUM) neurons (IC(50)=3.7 nM). This occurs in the absence of any shifts in the voltage dependence of activation. At high concentrations (330 nM), it partially inhibits cockroach delayed-rectifier potassium channels (Kv) currents. May interact with the turret and/or loop region of the external entrance to the channel and does not project deeply into the pore of the channel. In vivo, does not show toxicity in mice after intracerebroventricular injection of up to 25 pmol/g (1.8 ug/20 g mouse). The chain is Lambda-theraphotoxin-Ec2a from Eucratoscelus constrictus (African red-rump baboon spider).